The primary structure comprises 397 residues: Elongation factor Tu (397 aa).

Residues 10-206 form the tr-type G domain; sequence KPHVNIGTIG…AVDESIPEPQ (197 aa). Residues 19 to 26 form a G1 region; the sequence is GHIDHGKT. Position 19-26 (19-26) interacts with GTP; that stretch reads GHIDHGKT. Threonine 26 is a binding site for Mg(2+). The segment at 62 to 66 is G2; the sequence is GITIS. The G3 stretch occupies residues 83-86; that stretch reads DCPG. GTP is bound by residues 83 to 87 and 138 to 141; these read DCPGH and NKAD. A G4 region spans residues 138 to 141; it reads NKAD. A G5 region spans residues 176–178; it reads SAL.

It belongs to the TRAFAC class translation factor GTPase superfamily. Classic translation factor GTPase family. EF-Tu/EF-1A subfamily. Monomer.

Its subcellular location is the cytoplasm. The catalysed reaction is GTP + H2O = GDP + phosphate + H(+). Functionally, GTP hydrolase that promotes the GTP-dependent binding of aminoacyl-tRNA to the A-site of ribosomes during protein biosynthesis. This is Elongation factor Tu from Frankia casuarinae (strain DSM 45818 / CECT 9043 / HFP020203 / CcI3).